The sequence spans 513 residues: Histidine ammonia-lyase (513 aa).

Residues 144–146 (ASG) constitute a cross-link (5-imidazolinone (Ala-Gly)). S145 carries the post-translational modification 2,3-didehydroalanine (Ser).

This sequence belongs to the PAL/histidase family. Contains an active site 4-methylidene-imidazol-5-one (MIO), which is formed autocatalytically by cyclization and dehydration of residues Ala-Ser-Gly.

It is found in the cytoplasm. The catalysed reaction is L-histidine = trans-urocanate + NH4(+). The protein operates within amino-acid degradation; L-histidine degradation into L-glutamate; N-formimidoyl-L-glutamate from L-histidine: step 1/3. This is Histidine ammonia-lyase from Streptococcus pyogenes serotype M3 (strain ATCC BAA-595 / MGAS315).